The following is a 157-amino-acid chain: MYPPKASGDPAAGAAPVTGFPVGGPAASSQWSSGLLDCFDDCGLCCLTCWCPCITFGRVAEIVDRGATSCGTAGALYAVLAYFTGCQWIYSCTYRAKMRAQLGLPETPCCDCLVHFCCEPCALCQQYKELKARGFDPVLGWDRNATMLPPSAQGMGR.

The next 2 helical transmembrane spans lie at 41–57 (DCGL…ITFG) and 66–83 (GATS…LAYF).

Belongs to the cornifelin family. In terms of tissue distribution, expressed in roots, leaves, stalks, immature ears and silks.

The protein localises to the membrane. The polypeptide is Cell number regulator 10 (CNR10) (Zea mays (Maize)).